A 123-amino-acid chain; its full sequence is Defensin beta 118 (123 aa).

Positions 1–19 (MKLLLLALPMLVLLPQVIP) are cleaved as a signal peptide. Disulfide bonds link C27–C54, C34–C48, and C38–C55. 2 disordered regions span residues 59–79 (NEDH…STPG) and 102–123 (MVEE…HHSS). The propeptide occupies 64–123 (QVPTTSPTPLSDSTPGSIDDILTVRFTTDYFEVSSKKDMVEESEAGWGTQTSLPDVHHSS). Low complexity predominate over residues 66–79 (PTTSPTPLSDSTPG).

This sequence belongs to the beta-defensin family. In terms of processing, the three-dimensional structure formed by the three intramolecular disulfide bridges is indispensable for antimicrobial activity.

The protein resides in the secreted. Host defense peptide that exhibits antimicrobial activity against both Gram-negative bacteria, such as E.coli and S.typhimurium, and Gram-positive bacteria, such as S.aureus and B.subtilis. Inhibits cell adhesion of E.coli on intestinal epithelial enterocytes. Causes rapid permeabilization of both the outer and inner membrane of E.coli, leading to morphological alterations on the bacterial surface. Binds to bacterial lipopolysaccharides (LPS) with high affinity, and may thereby be involved in immunoregulation through LPS neutralization. May contribute to epididymal innate immunity and protect the sperm against attack by microorganisms. The chain is Defensin beta 118 (DEFB118) from Hylobates lar (Lar gibbon).